Consider the following 531-residue polypeptide: MATTATPQLLGGSVPQQWQTCLLVLLPVLLVSYYLLTSRSRNRSRSGKLGGAPRLPPGPAQLPILGNLHLLGPLPHKNLRELARRYGPVMQLRLGTVPTVVVSSAEAAREVLKVHDVDCCSRPASPGPKRLSYDLKNVGFAPYGEYWREMRKLFALELLSMRRVKAACYAREQEMDRLVADLDRAAASKASIVLNDHVFALTDGIIGTVAFGNIYASKQFAHKERFQHVLDDAMDMMASFSAEDFFPNAAGRLADRLSGFLARRERIFNELDVFFEKVIDQHMDPARPVPDNGGDLVDVLINLCKEHDGTLRFTRDHVKAIVLDTFIGAIDTSSVTILWAMSELMRKPQVLRKAQAEVRAAVGDDKPRVNSEDAAKIPYLKMVVKETLRLHPPATLLVPRETMRDTTICGYDVPANTRVFVNAWAIGRDPASWPAPDEFNPDRFVGSDVDYYGSHFELIPFGAGRRICPGLTMGETNVTFTLANLLYCYDWALPGAMKPEDVSMEETGALTFHRKTPLVVVPTKYKNRRAA.

A helical transmembrane segment spans residues W18–S38. Positions 122, 151, 466, and 468 each coordinate heme b.

It belongs to the cytochrome P450 family. Heme b serves as cofactor.

Its subcellular location is the endoplasmic reticulum membrane. The catalysed reaction is (E)-4-hydroxyphenylacetaldehyde oxime + reduced [NADPH--hemoprotein reductase] + O2 = (S)-4-hydroxymandelonitrile + oxidized [NADPH--hemoprotein reductase] + 2 H2O + H(+). It carries out the reaction (E)-4-hydroxyphenylacetaldehyde oxime = (Z)-(4-hydroxyphenyl)acetaldehyde oxime. The enzyme catalyses (Z)-(4-hydroxyphenyl)acetaldehyde oxime = 4-hydroxyphenylacetonitrile + H2O. It catalyses the reaction 4-hydroxyphenylacetonitrile + reduced [NADPH--hemoprotein reductase] + O2 = (S)-4-hydroxymandelonitrile + oxidized [NADPH--hemoprotein reductase] + H2O + H(+). Its pathway is secondary metabolite biosynthesis; dhurrin biosynthesis; dhurrin from L-tyrosine: step 2/3. Cytochrome P450 involved in the biosynthesis of the cyanogenic glucoside dhurrin. Catalyzes the conversion of p-hydroxyphenylacetaldoxime to p-hydroxymandelonitrile via three different and successive activities: isomerization of the (E) isomer to the (Z) isomer of p-hydroxyphenylacetaldoxime, followed by dehydration of the oxime to the corresponding nitrile, and C-hydroxylation of the nitrile to produce p-hydroxymandelonitrile. In Sorghum bicolor (Sorghum), this protein is 4-hydroxyphenylacetaldehyde oxime monooxygenase.